A 131-amino-acid polypeptide reads, in one-letter code: Small ribosomal subunit protein uS12 (131 aa).

Asp-89 carries the 3-methylthioaspartic acid modification.

Belongs to the universal ribosomal protein uS12 family. In terms of assembly, part of the 30S ribosomal subunit. Contacts proteins S8 and S17. May interact with IF1 in the 30S initiation complex.

Functionally, with S4 and S5 plays an important role in translational accuracy. In terms of biological role, interacts with and stabilizes bases of the 16S rRNA that are involved in tRNA selection in the A site and with the mRNA backbone. Located at the interface of the 30S and 50S subunits, it traverses the body of the 30S subunit contacting proteins on the other side and probably holding the rRNA structure together. The combined cluster of proteins S8, S12 and S17 appears to hold together the shoulder and platform of the 30S subunit. The chain is Small ribosomal subunit protein uS12 from Campylobacter concisus (strain 13826).